Reading from the N-terminus, the 273-residue chain is Cytoplasmic phosphatidylinositol transfer protein 1 (273 aa).

Positions 244 to 273 (QAETNEKIHNTSGGANAAANAKEANDGDID) are disordered.

It belongs to the PtdIns transfer protein family. PI transfer class IIB subfamily.

In terms of biological role, phosphatidylinositol transfer proteins mediate the monomeric transport of lipids by shielding a lipid from the aqueous environment and binding the lipid in a hydrophobic cavity. In Drosophila melanogaster (Fruit fly), this protein is Cytoplasmic phosphatidylinositol transfer protein 1 (rdgBbeta).